The sequence spans 479 residues: Glycogen synthase (479 aa).

Lys-15 contributes to the ADP-alpha-D-glucose binding site.

It belongs to the glycosyltransferase 1 family. Bacterial/plant glycogen synthase subfamily.

The catalysed reaction is [(1-&gt;4)-alpha-D-glucosyl](n) + ADP-alpha-D-glucose = [(1-&gt;4)-alpha-D-glucosyl](n+1) + ADP + H(+). Its pathway is glycan biosynthesis; glycogen biosynthesis. Synthesizes alpha-1,4-glucan chains using ADP-glucose. The sequence is that of Glycogen synthase from Nostoc punctiforme (strain ATCC 29133 / PCC 73102).